A 232-amino-acid chain; its full sequence is Cytochrome c oxidase subunit 2 (232 aa).

Over 1 to 30 (MNNFFQDFNLLFSSSLFSSYMDWFYNFNCS) the chain is Mitochondrial intermembrane. Residues 31 to 52 (LLFGVLSFVSTMFVYLLLSSFY) traverse the membrane as a helical segment. The Mitochondrial matrix segment spans residues 53–69 (FKSKKIEYQFGELLCSV). A helical membrane pass occupies residues 70 to 89 (FPTLILVMQMVPSLSLLYYY). The Mitochondrial intermembrane segment spans residues 90–232 (GLMNLDSSLT…KSWCVGLLSD (143 aa)). Residues H164, C199, E201, C203, H207, and M210 each coordinate Cu cation. E201 contributes to the Mg(2+) binding site.

It belongs to the cytochrome c oxidase subunit 2 family. Component of the cytochrome c oxidase (complex IV, CIV), a multisubunit enzyme composed of a catalytic core of 3 subunits and several supernumerary subunits. The complex exists as a monomer or a dimer and forms supercomplexes (SCs) in the inner mitochondrial membrane with ubiquinol-cytochrome c oxidoreductase (cytochrome b-c1 complex, complex III, CIII). Cu cation is required as a cofactor.

The protein resides in the mitochondrion inner membrane. The catalysed reaction is 4 Fe(II)-[cytochrome c] + O2 + 8 H(+)(in) = 4 Fe(III)-[cytochrome c] + 2 H2O + 4 H(+)(out). Component of the cytochrome c oxidase, the last enzyme in the mitochondrial electron transport chain which drives oxidative phosphorylation. The respiratory chain contains 3 multisubunit complexes succinate dehydrogenase (complex II, CII), ubiquinol-cytochrome c oxidoreductase (cytochrome b-c1 complex, complex III, CIII) and cytochrome c oxidase (complex IV, CIV), that cooperate to transfer electrons derived from NADH and succinate to molecular oxygen, creating an electrochemical gradient over the inner membrane that drives transmembrane transport and the ATP synthase. Cytochrome c oxidase is the component of the respiratory chain that catalyzes the reduction of oxygen to water. Electrons originating from reduced cytochrome c in the intermembrane space (IMS) are transferred via the dinuclear copper A center (CU(A)) of subunit 2 and heme A of subunit 1 to the active site in subunit 1, a binuclear center (BNC) formed by heme A3 and copper B (CU(B)). The BNC reduces molecular oxygen to 2 water molecules using 4 electrons from cytochrome c in the IMS and 4 protons from the mitochondrial matrix. The polypeptide is Cytochrome c oxidase subunit 2 (COII) (Ascaris suum (Pig roundworm)).